The following is a 488-amino-acid chain: Ribulose bisphosphate carboxylase large chain (488 aa).

2 residues coordinate substrate: Asn-128 and Thr-178. Lys-180 (proton acceptor) is an active-site residue. Lys-182 is a binding site for substrate. Lys-206, Asp-208, and Glu-209 together coordinate Mg(2+). An N6-carboxylysine modification is found at Lys-206. The active-site Proton acceptor is the His-298. 3 residues coordinate substrate: Arg-299, His-331, and Ser-383.

This sequence belongs to the RuBisCO large chain family. Type I subfamily. Heterohexadecamer of 8 large chains and 8 small chains. It depends on Mg(2+) as a cofactor.

The enzyme catalyses 2 (2R)-3-phosphoglycerate + 2 H(+) = D-ribulose 1,5-bisphosphate + CO2 + H2O. It carries out the reaction D-ribulose 1,5-bisphosphate + O2 = 2-phosphoglycolate + (2R)-3-phosphoglycerate + 2 H(+). Its function is as follows. RuBisCO catalyzes two reactions: the carboxylation of D-ribulose 1,5-bisphosphate, the primary event in carbon dioxide fixation, as well as the oxidative fragmentation of the pentose substrate. Both reactions occur simultaneously and in competition at the same active site. This chain is Ribulose bisphosphate carboxylase large chain, found in Xanthobacter autotrophicus (strain ATCC BAA-1158 / Py2).